A 499-amino-acid polypeptide reads, in one-letter code: Glucose-6-phosphate exchanger SLC37A2 (499 aa).

A helical transmembrane segment spans residues 21 to 40 (YRGFIIVMTFLFYTCYHMSR). 3 N-linked (GlcNAc...) asparagine glycosylation sites follow: N53, N62, and N66. 11 helical membrane-spanning segments follow: residues 86–106 (GSLD…SGIF), 116–136 (LSGG…GYYW), 138–158 (IHAL…QTTG), 187–207 (AVGN…AWGL), 208–228 (SFIV…FFLV), 302–322 (LCLL…PLYI), 334–354 (GDLS…AGGI), 362–382 (AITC…YNYL), 391–411 (VAML…ITTA), 434–454 (AIID…AGVL), and 458–478 (GWNY…LLLV).

It belongs to the major facilitator superfamily. Organophosphate:Pi antiporter (OPA) (TC 2.A.1.4) family.

The protein localises to the endoplasmic reticulum membrane. It carries out the reaction D-glucose 6-phosphate(in) + phosphate(out) = D-glucose 6-phosphate(out) + phosphate(in). Inorganic phosphate and glucose-6-phosphate antiporter. May transport cytoplasmic glucose-6-phosphate into the lumen of the endoplasmic reticulum and translocate inorganic phosphate into the opposite direction. In Xenopus tropicalis (Western clawed frog), this protein is Glucose-6-phosphate exchanger SLC37A2.